A 138-amino-acid chain; its full sequence is Histone H3-like centromeric protein A (138 aa).

Positions 1–40 (MGPRRQKRKPETPRRRPASPAPAAPRPTPSLGTSSRPLAR) are disordered. Position 2 is a n,N,N-trimethylglycine (Gly-2). Residue Ser-19 is modified to Phosphoserine. Residues 19 to 28 (SPAPAAPRPT) show a composition bias toward pro residues. An important for flexibility of DNA ends that protrude from nucleosomes region spans residues 37-52 (PLARRRHTVLKEIRTL). The H3-like stretch occupies residues 39–138 (ARRRHTVLKE…RIRGIQEGLG (100 aa)). The segment at 73-114 (CVQFTRGVDFNWQAQALLALQEAAEAFLVHLFEDAYLLSLHA) is CATD.

It belongs to the histone H3 family. In terms of assembly, component of centromeric nucleosomes, where DNA is wrapped around a histone octamer core. The octamer contains two molecules each of H2A, H2B, CENPA and H4 assembled in one CENPA-H4 heterotetramer and two H2A-H2B heterodimers. CENPA modulates the DNA-binding characteristics of nucleosomes so that protruding DNA ends have higher flexibility than in nucleosomes containing conventional histone H3. Inhibits binding of histone H1 to nucleosomes, since histone H1 binds preferentially to rigid DNA linkers that protrude from nucleosomes. Nucleosomes containing CENPA also contain histone H2A variants such as MACROH2A and H2A.Z/H2AZ1. The CENPA-H4 heterotetramer is more compact and structurally more rigid than corresponding H3-H4 heterotetramers. Can assemble into nucleosomes that contain both CENPA and histone H3.3; these nucleosomes interact with a single CENPC chain. Heterotrimer composed of HJURP, CENPA and histone H4, where HJURP interacts with the dimer formed by CENPA and histone H4 and prevents tetramerization of CENPA and H4. Component of the CENPA-NAC complex, at least composed of CENPA, CENPC, CENPH, CENPM, CENPN, CENPT and CENPU. Interacts (via CATD domain) with HJURP; the interaction is direct and is required for its localization to centromeres. Interacts with CENPC, CENPN and CENPT; interaction is direct. Part of a centromere complex consisting of CENPA, CENPT and CENPW. Identified in centromere complexes containing histones H2A, H2B and H4, and at least CENPA, CENPB, CENPC, CENPT, CENPN, HJURP, SUPT16H, SSRP1 and RSF1. Can self-associate. The CENPA-H4 heterotetramer can bind DNA by itself (in vitro). Interacts with CDK1, PPP1CA and RBBP7. In terms of processing, trimethylated by NTMT1 at the N-terminal glycine after cleavage of Met-1. Methylation is low before incorporation into nucleosomes and increases with cell cycle progression, with the highest levels in mitotic nucleosomes. Post-translationally, poly-ADP-ribosylated by PARP1.

The protein resides in the nucleus. It localises to the chromosome. Its subcellular location is the centromere. Its function is as follows. Histone H3-like nucleosomal protein that is specifically found in centromeric nucleosomes. Replaces conventional H3 in the nucleosome core of centromeric chromatin that serves as an assembly site for the inner kinetochore. The presence of CENPA subtly modifies the nucleosome structure and the way DNA is wrapped around the nucleosome and gives rise to protruding DNA ends that are less well-ordered and rigid compared to nucleosomes containing histone H3. May serve as an epigenetic mark that propagates centromere identity through replication and cell division. Required for recruitment and assembly of kinetochore proteins, and as a consequence required for progress through mitosis, chromosome segregation and cytokinesis. In Bos taurus (Bovine), this protein is Histone H3-like centromeric protein A (CENPA).